Here is a 151-residue protein sequence, read N- to C-terminus: ATP synthase subunit b' (151 aa).

Residues 18-38 (TLPLMALQVVLLTFILNALFF) form a helical membrane-spanning segment.

It belongs to the ATPase B chain family. F-type ATPases have 2 components, F(1) - the catalytic core - and F(0) - the membrane proton channel. F(1) has five subunits: alpha(3), beta(3), gamma(1), delta(1), epsilon(1). F(0) has four main subunits: a(1), b(1), b'(1) and c(10-14). The alpha and beta chains form an alternating ring which encloses part of the gamma chain. F(1) is attached to F(0) by a central stalk formed by the gamma and epsilon chains, while a peripheral stalk is formed by the delta, b and b' chains.

The protein localises to the cellular thylakoid membrane. In terms of biological role, f(1)F(0) ATP synthase produces ATP from ADP in the presence of a proton or sodium gradient. F-type ATPases consist of two structural domains, F(1) containing the extramembraneous catalytic core and F(0) containing the membrane proton channel, linked together by a central stalk and a peripheral stalk. During catalysis, ATP synthesis in the catalytic domain of F(1) is coupled via a rotary mechanism of the central stalk subunits to proton translocation. Functionally, component of the F(0) channel, it forms part of the peripheral stalk, linking F(1) to F(0). The b'-subunit is a diverged and duplicated form of b found in plants and photosynthetic bacteria. This chain is ATP synthase subunit b', found in Prochlorococcus marinus (strain MIT 9303).